Reading from the N-terminus, the 204-residue chain is Putative peroxiredoxin ycf42 (204 aa).

Residues proline 5 to tyrosine 163 enclose the Thioredoxin domain.

Belongs to the peroxiredoxin family. AhpC/Prx1 subfamily.

It localises to the plastid. The protein localises to the chloroplast. The catalysed reaction is a hydroperoxide + [protein]-dithiol = [protein]-disulfide + an alcohol + H2O. The sequence is that of Putative peroxiredoxin ycf42 (ycf42) from Trieres chinensis (Marine centric diatom).